A 122-amino-acid chain; its full sequence is uncharacterized protein (122 aa).

The next 2 helical transmembrane spans lie at 36–56 (SVRS…YSQF) and 72–92 (AVFL…FSTD).

The protein localises to the membrane. This is an uncharacterized protein from Saccharomyces cerevisiae (strain ATCC 204508 / S288c) (Baker's yeast).